A 271-amino-acid chain; its full sequence is MTERVRVAITGGSGRMGRTLIEAAKQNDAILLGAAIERAGSTLMGVDAGELAGVGAMNVAITDSLDKAVDDFDVLIDFTSPEASVIHTDWCAKHGKAIVIGTTGFNHAQKEQISAYSEQVPIVMAPNMAVGVNLMWKLLEVAAEVMGHYSDIEIIEGHHRYKKDAPSGTALKMGEVIAETLGRDLEKCAVYGREGITGERDRETIGFATVRAGDIVGEHTALFADIGERLEITHKASSRMTFANGAMRAASWLSAQGSGLYDMQQVLGLKE.

NAD(+) is bound by residues 11 to 16 (GGSGRM) and Glu-37. NADP(+) is bound at residue Arg-38. Residues 101–103 (GTT) and 125–128 (APNM) each bind NAD(+). Residue His-158 is the Proton donor/acceptor of the active site. Residue His-159 participates in (S)-2,3,4,5-tetrahydrodipicolinate binding. Residue Lys-162 is the Proton donor of the active site. Position 168 to 169 (168 to 169 (GT)) interacts with (S)-2,3,4,5-tetrahydrodipicolinate.

It belongs to the DapB family.

Its subcellular location is the cytoplasm. The catalysed reaction is (S)-2,3,4,5-tetrahydrodipicolinate + NAD(+) + H2O = (2S,4S)-4-hydroxy-2,3,4,5-tetrahydrodipicolinate + NADH + H(+). The enzyme catalyses (S)-2,3,4,5-tetrahydrodipicolinate + NADP(+) + H2O = (2S,4S)-4-hydroxy-2,3,4,5-tetrahydrodipicolinate + NADPH + H(+). The protein operates within amino-acid biosynthesis; L-lysine biosynthesis via DAP pathway; (S)-tetrahydrodipicolinate from L-aspartate: step 4/4. Catalyzes the conversion of 4-hydroxy-tetrahydrodipicolinate (HTPA) to tetrahydrodipicolinate. In Shewanella piezotolerans (strain WP3 / JCM 13877), this protein is 4-hydroxy-tetrahydrodipicolinate reductase.